The primary structure comprises 609 residues: NURS complex subunit pir2 (609 aa).

Residues 1–25 show a composition bias toward basic and acidic residues; that stretch reads MSEVHQESEVEYSRWKRERSPERSQ. Disordered stretches follow at residues 1 to 60 and 187 to 210; these read MSEV…RASG and EKPS…QLSK. The span at 27–36 shows a compositional bias: low complexity; that stretch reads RSQSPPGEQS. S28 and S30 each carry phosphoserine. A compositionally biased stretch (basic and acidic residues) spans 37-57; it reads AYHRERSPLRKRGNYYDDRTR. Over residues 201 to 210 the composition is skewed to polar residues; it reads LPSNDPQLSK. Residues 474-499 form a C2H2-type zinc finger; sequence YRCHVGTCAKLFLGPEFVRKHINKKH.

The protein belongs to the ARS2 family. Interacts with ccr4.

The protein localises to the nucleus. The polypeptide is NURS complex subunit pir2 (Schizosaccharomyces pombe (strain 972 / ATCC 24843) (Fission yeast)).